Reading from the N-terminus, the 423-residue chain is ATP-citrate synthase alpha chain protein 1 (423 aa).

Positions 343, 345, and 376 each coordinate citrate.

This sequence belongs to the succinate/malate CoA ligase beta subunit family. As to quaternary structure, heterooctamer of 4 alpha and 4 beta chains. In terms of tissue distribution, expressed in trichomes, epidermal leaf cells, anther tapetal cells, stigma and in young vascular bundles of expanding leaves, cotyledons, roots, pedicel of flowers and siliques.

The protein localises to the cytoplasm. The protein resides in the cytosol. The enzyme catalyses oxaloacetate + acetyl-CoA + ADP + phosphate = citrate + ATP + CoA. Its function is as follows. ATP citrate-lyase is the primary enzyme responsible for the synthesis of cytosolic acetyl-CoA, used for the elongation of fatty acids and biosynthesis of isoprenoids, flavonoids and malonated derivatives. May supply substrate to the cytosolic acetyl-CoA carboxylase, which generates the malonyl-CoA used for the synthesis of a multitude of compounds, including very long chain fatty acids and flavonoids. Required for normal growth and development and elongation of C18 fatty acids to C20 to C24 fatty acids in seeds. In contrast to all known animal ACL enzymes having a homomeric structure, plant ACLs are composed of alpha and beta chains. The protein is ATP-citrate synthase alpha chain protein 1 (ACLA-1) of Arabidopsis thaliana (Mouse-ear cress).